The primary structure comprises 282 residues: Bis(5'-nucleosyl)-tetraphosphatase, symmetrical (282 aa).

It belongs to the Ap4A hydrolase family.

The enzyme catalyses P(1),P(4)-bis(5'-adenosyl) tetraphosphate + H2O = 2 ADP + 2 H(+). Its function is as follows. Hydrolyzes diadenosine 5',5'''-P1,P4-tetraphosphate to yield ADP. In Enterobacter sp. (strain 638), this protein is Bis(5'-nucleosyl)-tetraphosphatase, symmetrical.